Reading from the N-terminus, the 209-residue chain is Outer-membrane lipoprotein carrier protein (209 aa).

Residues 1–21 form the signal peptide; the sequence is MHRQLRYAVLATALFASTAFA.

The protein belongs to the LolA family. As to quaternary structure, monomer.

It is found in the periplasm. Participates in the translocation of lipoproteins from the inner membrane to the outer membrane. Only forms a complex with a lipoprotein if the residue after the N-terminal Cys is not an aspartate (The Asp acts as a targeting signal to indicate that the lipoprotein should stay in the inner membrane). The sequence is that of Outer-membrane lipoprotein carrier protein from Xanthomonas oryzae pv. oryzae (strain MAFF 311018).